Reading from the N-terminus, the 473-residue chain is Photosystem II CP43 reaction center protein (473 aa).

The propeptide occupies 1 to 14 (MKILYSLRRFYHVE). Thr15 is modified (N-acetylthreonine). Thr15 is subject to Phosphothreonine. A run of 5 helical transmembrane segments spans residues 69 to 93 (LFEV…PHLA), 134 to 155 (LLGP…KDRN), 178 to 200 (KALY…RKIT), 255 to 275 (KPFA…LSYS), and 291 to 312 (WFNN…ASQA). Residue Glu367 participates in [CaMn4O5] cluster binding. Residues 447 to 471 (RARAAAAGFEKGIDRDLEPVLYMNP) form a helical membrane-spanning segment.

The protein belongs to the PsbB/PsbC family. PsbC subfamily. As to quaternary structure, PSII is composed of 1 copy each of membrane proteins PsbA, PsbB, PsbC, PsbD, PsbE, PsbF, PsbH, PsbI, PsbJ, PsbK, PsbL, PsbM, PsbT, PsbX, PsbY, PsbZ, Psb30/Ycf12, at least 3 peripheral proteins of the oxygen-evolving complex and a large number of cofactors. It forms dimeric complexes. Binds multiple chlorophylls and provides some of the ligands for the Ca-4Mn-5O cluster of the oxygen-evolving complex. It may also provide a ligand for a Cl- that is required for oxygen evolution. PSII binds additional chlorophylls, carotenoids and specific lipids. serves as cofactor.

Its subcellular location is the plastid. It is found in the chloroplast thylakoid membrane. In terms of biological role, one of the components of the core complex of photosystem II (PSII). It binds chlorophyll and helps catalyze the primary light-induced photochemical processes of PSII. PSII is a light-driven water:plastoquinone oxidoreductase, using light energy to abstract electrons from H(2)O, generating O(2) and a proton gradient subsequently used for ATP formation. In Brachypodium distachyon (Purple false brome), this protein is Photosystem II CP43 reaction center protein.